Here is a 203-residue protein sequence, read N- to C-terminus: Pyridoxal 5'-phosphate synthase subunit PdxT (203 aa).

Residue 51-53 coordinates L-glutamine; the sequence is GES. The active-site Nucleophile is cysteine 83. L-glutamine-binding positions include arginine 110 and 137-138; that span reads IR. Residues histidine 172 and glutamate 174 each act as charge relay system in the active site.

This sequence belongs to the glutaminase PdxT/SNO family. In terms of assembly, in the presence of PdxS, forms a dodecamer of heterodimers. Only shows activity in the heterodimer.

It carries out the reaction aldehydo-D-ribose 5-phosphate + D-glyceraldehyde 3-phosphate + L-glutamine = pyridoxal 5'-phosphate + L-glutamate + phosphate + 3 H2O + H(+). The enzyme catalyses L-glutamine + H2O = L-glutamate + NH4(+). It participates in cofactor biosynthesis; pyridoxal 5'-phosphate biosynthesis. Its function is as follows. Catalyzes the hydrolysis of glutamine to glutamate and ammonia as part of the biosynthesis of pyridoxal 5'-phosphate. The resulting ammonia molecule is channeled to the active site of PdxS. In Thermoplasma acidophilum (strain ATCC 25905 / DSM 1728 / JCM 9062 / NBRC 15155 / AMRC-C165), this protein is Pyridoxal 5'-phosphate synthase subunit PdxT.